The following is a 492-amino-acid chain: N-succinylglutamate 5-semialdehyde dehydrogenase (492 aa).

220–225 provides a ligand contact to NAD(+); sequence GSASTG. Residues Glu243 and Cys277 contribute to the active site.

It belongs to the aldehyde dehydrogenase family. AstD subfamily.

The enzyme catalyses N-succinyl-L-glutamate 5-semialdehyde + NAD(+) + H2O = N-succinyl-L-glutamate + NADH + 2 H(+). Its pathway is amino-acid degradation; L-arginine degradation via AST pathway; L-glutamate and succinate from L-arginine: step 4/5. Functionally, catalyzes the NAD-dependent reduction of succinylglutamate semialdehyde into succinylglutamate. This chain is N-succinylglutamate 5-semialdehyde dehydrogenase, found in Salmonella paratyphi B (strain ATCC BAA-1250 / SPB7).